Consider the following 406-residue polypeptide: NADH-ubiquinone oxidoreductase 49 kDa subunit (406 aa).

It belongs to the complex I 49 kDa subunit family. As to quaternary structure, complex I is composed of 45 different subunits. Component of the iron-sulfur (IP) fragment of the enzyme.

It localises to the mitochondrion inner membrane. It carries out the reaction a ubiquinone + NADH + 5 H(+)(in) = a ubiquinol + NAD(+) + 4 H(+)(out). Core subunit of the mitochondrial membrane respiratory chain NADH dehydrogenase (Complex I) that is believed to belong to the minimal assembly required for catalysis. Complex I functions in the transfer of electrons from NADH to the respiratory chain. The immediate electron acceptor for the enzyme is believed to be ubiquinone. The sequence is that of NADH-ubiquinone oxidoreductase 49 kDa subunit (nad7) from Dictyostelium discoideum (Social amoeba).